The sequence spans 513 residues: ATP synthase subunit alpha (513 aa).

Glycine 169 to threonine 176 is a binding site for ATP.

Belongs to the ATPase alpha/beta chains family. F-type ATPases have 2 components, CF(1) - the catalytic core - and CF(0) - the membrane proton channel. CF(1) has five subunits: alpha(3), beta(3), gamma(1), delta(1), epsilon(1). CF(0) has three main subunits: a(1), b(2) and c(9-12). The alpha and beta chains form an alternating ring which encloses part of the gamma chain. CF(1) is attached to CF(0) by a central stalk formed by the gamma and epsilon chains, while a peripheral stalk is formed by the delta and b chains.

It localises to the cell inner membrane. It carries out the reaction ATP + H2O + 4 H(+)(in) = ADP + phosphate + 5 H(+)(out). Functionally, produces ATP from ADP in the presence of a proton gradient across the membrane. The alpha chain is a regulatory subunit. This chain is ATP synthase subunit alpha, found in Ralstonia nicotianae (strain ATCC BAA-1114 / GMI1000) (Ralstonia solanacearum).